Here is a 372-residue protein sequence, read N- to C-terminus: Tyrosine--tRNA ligase (372 aa).

Positions 37, 169, 173, 176, and 191 each coordinate L-tyrosine. Positions 246–250 match the 'KMSKS' region motif; that stretch reads KMSKS. Residue Lys249 coordinates ATP.

It belongs to the class-I aminoacyl-tRNA synthetase family. TyrS type 4 subfamily. In terms of assembly, homodimer.

The protein localises to the cytoplasm. The enzyme catalyses tRNA(Tyr) + L-tyrosine + ATP = L-tyrosyl-tRNA(Tyr) + AMP + diphosphate + H(+). In terms of biological role, catalyzes the attachment of tyrosine to tRNA(Tyr) in a two-step reaction: tyrosine is first activated by ATP to form Tyr-AMP and then transferred to the acceptor end of tRNA(Tyr). This chain is Tyrosine--tRNA ligase, found in Pyrobaculum arsenaticum (strain DSM 13514 / JCM 11321 / PZ6).